Reading from the N-terminus, the 143-residue chain is Peptidyl-prolyl cis-trans isomerase FKBP15-3 (143 aa).

The PPIase FKBP-type domain maps to 56–143 (GKRVSVHYTG…VFDVELLNVK (88 aa)).

It belongs to the FKBP-type PPIase family.

It carries out the reaction [protein]-peptidylproline (omega=180) = [protein]-peptidylproline (omega=0). PPIases accelerate the folding of proteins. It catalyzes the cis-trans isomerization of proline imidic peptide bonds in oligopeptides. The polypeptide is Peptidyl-prolyl cis-trans isomerase FKBP15-3 (FKBP15-3) (Arabidopsis thaliana (Mouse-ear cress)).